A 492-amino-acid chain; its full sequence is Bifunctional protein GlmU (492 aa).

Positions 1-238 (MRDAAVVILA…AALVAGVNDR (238 aa)) are pyrophosphorylase. Residues 9-12 (LAAG), K23, Q80, and 85-86 (GT) each bind UDP-N-acetyl-alpha-D-glucosamine. D111 provides a ligand contact to Mg(2+). The UDP-N-acetyl-alpha-D-glucosamine site is built by G148, E163, N178, and N236. Position 236 (N236) interacts with Mg(2+). Residues 239-259 (VQLADLAAVLNRRIVEGHQRA) are linker. The interval 260 to 492 (GVTIIDPAST…EDQGPEATGE (233 aa)) is N-acetyltransferase. Positions 341 and 359 each coordinate UDP-N-acetyl-alpha-D-glucosamine. H371 acts as the Proton acceptor in catalysis. UDP-N-acetyl-alpha-D-glucosamine-binding residues include Y374 and N385. Acetyl-CoA-binding positions include A388, 394–395 (NY), S413, and A431. Residues 469–483 (EAAAAAGAGAGAAAE) show a composition bias toward low complexity. Positions 469–492 (EAAAAAGAGAGAAAEDQGPEATGE) are disordered.

In the N-terminal section; belongs to the N-acetylglucosamine-1-phosphate uridyltransferase family. This sequence in the C-terminal section; belongs to the transferase hexapeptide repeat family. In terms of assembly, homotrimer. Mg(2+) is required as a cofactor.

The protein localises to the cytoplasm. It catalyses the reaction alpha-D-glucosamine 1-phosphate + acetyl-CoA = N-acetyl-alpha-D-glucosamine 1-phosphate + CoA + H(+). It carries out the reaction N-acetyl-alpha-D-glucosamine 1-phosphate + UTP + H(+) = UDP-N-acetyl-alpha-D-glucosamine + diphosphate. Its pathway is nucleotide-sugar biosynthesis; UDP-N-acetyl-alpha-D-glucosamine biosynthesis; N-acetyl-alpha-D-glucosamine 1-phosphate from alpha-D-glucosamine 6-phosphate (route II): step 2/2. It functions in the pathway nucleotide-sugar biosynthesis; UDP-N-acetyl-alpha-D-glucosamine biosynthesis; UDP-N-acetyl-alpha-D-glucosamine from N-acetyl-alpha-D-glucosamine 1-phosphate: step 1/1. It participates in bacterial outer membrane biogenesis; LPS lipid A biosynthesis. In terms of biological role, catalyzes the last two sequential reactions in the de novo biosynthetic pathway for UDP-N-acetylglucosamine (UDP-GlcNAc). The C-terminal domain catalyzes the transfer of acetyl group from acetyl coenzyme A to glucosamine-1-phosphate (GlcN-1-P) to produce N-acetylglucosamine-1-phosphate (GlcNAc-1-P), which is converted into UDP-GlcNAc by the transfer of uridine 5-monophosphate (from uridine 5-triphosphate), a reaction catalyzed by the N-terminal domain. The protein is Bifunctional protein GlmU of Mycolicibacterium vanbaalenii (strain DSM 7251 / JCM 13017 / BCRC 16820 / KCTC 9966 / NRRL B-24157 / PYR-1) (Mycobacterium vanbaalenii).